Reading from the N-terminus, the 1050-residue chain is Diacylglycerol kinase iota (1050 aa).

2 disordered regions span residues 52–73 (NPSS…SGSG) and 325–356 (PQNS…ENKG). Over residues 332–347 (SNRKKKRTSFKRKASK) the composition is skewed to basic residues. The DAGKc domain occupies 367–502 (PLMKPLLVFV…DRWNLHVERN (136 aa)). ANK repeat units follow at residues 943-972 (GHCS…AELL) and 979-1008 (TGET…SLRQ). The short motif at 1048–1050 (TAV) is the PDZ-binding element.

The protein belongs to the eukaryotic diacylglycerol kinase family. As to quaternary structure, interacts (via PDZ-binding motif) with DLG4; controls the localization of DGKI to the synapse. Interacts (via PDZ-binding motif) with DLG1. Interacts (via PDZ-binding motif) with DLG2. Interacts (via PDZ-binding motif) with DLG3. May interact with RASGRP3; involved in the regulation of RASGRP3 activity. In terms of tissue distribution, specifically expressed in brain (at protein level). Expressed in hippocampus, cerebellum, brain stem and spinal cord (at protein level). Highly expressed in hippocampus, cerebellar cortex, olfactory bulb, and olfactory tubercle and to lower extent in the cerebral cortex, caudate putamen, and thalamus. Not detected in the white matter. Also expressed in eye. Major isoform in brain (at protein level). As to expression, minor isoform in brain (at protein level). In terms of tissue distribution, expressed in brain (at protein level).

It localises to the cell projection. The protein resides in the axon. Its subcellular location is the dendrite. The protein localises to the presynapse. It is found in the postsynapse. It localises to the postsynaptic density. The protein resides in the synaptic cell membrane. Its subcellular location is the cytoplasmic vesicle. The protein localises to the secretory vesicle. It is found in the synaptic vesicle membrane. It localises to the cytoplasm. The protein resides in the cytosol. Its subcellular location is the nucleus. The enzyme catalyses a 1,2-diacyl-sn-glycerol + ATP = a 1,2-diacyl-sn-glycero-3-phosphate + ADP + H(+). It carries out the reaction 1,2-di-(9Z-octadecenoyl)-sn-glycerol + ATP = 1,2-di-(9Z-octadecenoyl)-sn-glycero-3-phosphate + ADP + H(+). It catalyses the reaction 1-octadecanoyl-2-(9Z,12Z)-octadecadienoyl-sn-glycerol + ATP = 1-octadecanoyl-2-(9Z,12Z-octadecadienoyl)-sn-glycero-3-phosphate + ADP + H(+). The catalysed reaction is 1-octadecanoyl-2-(5Z,8Z,11Z,14Z-eicosatetraenoyl)-sn-glycerol + ATP = 1-octadecanoyl-2-(5Z,8Z,11Z,14Z-eicosatetraenoyl)-sn-glycero-3-phosphate + ADP + H(+). It participates in lipid metabolism; glycerolipid metabolism. Activated by phosphatidylserine. In terms of biological role, diacylglycerol kinase that converts diacylglycerol/DAG into phosphatidic acid/phosphatidate/PA and regulates the respective levels of these two bioactive lipids. Thereby, acts as a central switch between the signaling pathways activated by these second messengers with different cellular targets and opposite effects in numerous biological processes. Has probably no preference for any of the diacylglycerols in terms of the acyl chain composition, especially for the acyl chain at the sn-2 position. By controlling the diacylglycerol/DAG-mediated activation of RASGRP3, negatively regulates the Rap1 signaling pathway. May play a role in presynaptic diacylglycerol/DAG signaling and control neurotransmitter release during metabotropic glutamate receptor-dependent long-term depression. Functionally, has a decreased affinity for ATP and a reduced diacylglycerol kinase activity. Has no preference for any of the diacylglycerols in terms of the acyl chain composition. Its function is as follows. Has no diacylglycerol kinase activity. This chain is Diacylglycerol kinase iota, found in Rattus norvegicus (Rat).